The chain runs to 453 residues: Dibenzothiophene-sulfone monooxygenase (453 aa).

Residues Asp59, Thr106, His156, Tyr160, and Ser231 each contribute to the FMN site.

It belongs to the NtaA/SnaA/DszA monooxygenase family. Homodimer.

Its subcellular location is the cytoplasm. The enzyme catalyses dibenzothiophene 5,5-dioxide + FMNH2 + NADH + O2 = 2'-hydroxybiphenyl-2-sulfinate + FMN + NAD(+) + H2O + H(+). Its pathway is sulfur metabolism; dibenzothiophene degradation. Its function is as follows. Catalyzes the second step of the '4S' desulfurization pathway that removes covalently bound sulfur from dibenzothiophene (DBT) without breaking carbon-carbon bonds. Metabolizes DBT-sulfone (DBTO2 or DBT 5,5-dioxide) to 2-(2'-hydroxyphenyl)benzene sulphinate (HBPS). The protein is Dibenzothiophene-sulfone monooxygenase of Rhodococcus erythropolis (strain XP).